The chain runs to 369 residues: Deoxyuridine 5'-triphosphate nucleotidohydrolase (369 aa).

Residues Arg-258–Ser-260 and Phe-364–Gly-365 contribute to the substrate site.

The protein belongs to the dUTPase family. The cofactor is Mg(2+).

It catalyses the reaction dUTP + H2O = dUMP + diphosphate + H(+). Its function is as follows. Involved in nucleotide metabolism: produces dUMP, the immediate precursor of thymidine nucleotides and decreases the intracellular concentration of dUTP to avoid uracil incorporation into viral DNA. In Homo sapiens (Human), this protein is Deoxyuridine 5'-triphosphate nucleotidohydrolase.